A 177-amino-acid chain; its full sequence is Macro domain-containing protein in non 5'region (177 aa).

One can recognise a Macro domain in the interval 1-177 (MSTSVSPVVR…VEFEEVLAMR (177 aa)).

This sequence belongs to the MacroD-type family.

The protein is Macro domain-containing protein in non 5'region of Streptomyces griseus.